The sequence spans 432 residues: Adenylosuccinate synthetase 2 (432 aa).

GTP is bound by residues 12–18 (GDEGKGR) and 40–42 (GHT). Asp13 (proton acceptor) is an active-site residue. Asp13 and Gly40 together coordinate Mg(2+). Residues 13–16 (DEGK), 38–41 (NAGH), Thr128, Arg142, Gln222, Thr237, and Arg301 contribute to the IMP site. The active-site Proton donor is the His41. 297–303 (VNTGRPR) is a substrate binding site. GTP is bound by residues Arg303, 329–331 (KLD), and 411–413 (TTG).

The protein belongs to the adenylosuccinate synthetase family. In terms of assembly, homodimer. Requires Mg(2+) as cofactor.

Its subcellular location is the cytoplasm. The catalysed reaction is IMP + L-aspartate + GTP = N(6)-(1,2-dicarboxyethyl)-AMP + GDP + phosphate + 2 H(+). The protein operates within purine metabolism; AMP biosynthesis via de novo pathway; AMP from IMP: step 1/2. Plays an important role in the de novo pathway of purine nucleotide biosynthesis. Catalyzes the first committed step in the biosynthesis of AMP from IMP. The protein is Adenylosuccinate synthetase 2 of Burkholderia lata (strain ATCC 17760 / DSM 23089 / LMG 22485 / NCIMB 9086 / R18194 / 383).